The chain runs to 219 residues: Probable GTP-binding protein EngB (219 aa).

Residues 31–205 (VGVEIAFAGR…LSILNEWCHP (175 aa)) form the EngB-type G domain. GTP-binding positions include 39–46 (GRSNAGKS), 66–70 (GRTQL), 84–87 (DLPG), 151–154 (TKSD), and 184–186 (FSA). Residues S46 and T68 each coordinate Mg(2+).

This sequence belongs to the TRAFAC class TrmE-Era-EngA-EngB-Septin-like GTPase superfamily. EngB GTPase family. Requires Mg(2+) as cofactor.

Its function is as follows. Necessary for normal cell division and for the maintenance of normal septation. The protein is Probable GTP-binding protein EngB of Shewanella sp. (strain ANA-3).